The chain runs to 254 residues: Mannose-binding protein (254 aa).

A signal peptide spans 1–19 (MTLLQPFSALLLCLSLMMA). A disordered region spans residues 46-99 (NGLPGRDGRDGPKGEKGDPGEGLRGLQGLPGKAGPQGLKGEVGPQGEKGQKGER). The segment covering 51–66 (RDGRDGPKGEKGDPGE) has biased composition (basic and acidic residues). Proline 57 is modified (4-hydroxyproline). Lysine 58 and lysine 61 each carry 5-hydroxylysine. 2 O-linked (Gal...) hydroxylysine glycosylation sites follow: lysine 58 and lysine 61. The residue at position 75 (proline 75) is a 4-hydroxyproline. 5-hydroxylysine is present on residues lysine 93 and lysine 96. The region spanning 140 to 250 (VGKKMFVSTG…LDCSNSNIFI (111 aa)) is the C-type lectin domain. Cystine bridges form between cysteine 161–cysteine 252 and cysteine 229–cysteine 243.

In terms of assembly, oligomeric complex of 3 or more homotrimers.

The protein localises to the secreted. Calcium-dependent lectin involved in innate immune defense. Binds mannose, fucose and N-acetylglucosamine on different microorganisms and activates the lectin complement pathway. The chain is Mannose-binding protein from Gallus gallus (Chicken).